A 1127-amino-acid polypeptide reads, in one-letter code: Structural protein MDM1 (1127 aa).

The region spanning 85-273 (NAQIGKELES…WNLRIVSLSQ (189 aa)) is the PXA domain. Phosphoserine is present on residues serine 670, serine 673, and serine 692. Positions 705 to 762 (SNNFRDNIASLTISIDQIEKELELLRHLILKADLTNNQMQLKILKKSQRTLLKELEMK) form a coiled coil. The 124-residue stretch at 782–905 (TKIYIRSYFS…RFLTDPTPFK (124 aa)) folds into the PX domain.

It belongs to the sorting nexin family.

It localises to the cytoplasm. In terms of biological role, essential for mitotic growth. Mediates organelle inheritance. The polypeptide is Structural protein MDM1 (MDM1) (Saccharomyces cerevisiae (strain ATCC 204508 / S288c) (Baker's yeast)).